Consider the following 471-residue polypeptide: Regulator of microtubule dynamics protein 3 (471 aa).

Residues 1-9 (MSSLGTLGG) lie on the Mitochondrial intermembrane side of the membrane. Residues 10-32 (ARAGLGLLLGTAAGLGFLCALYS) form a helical membrane-spanning segment. Topologically, residues 33–471 (QRWKRTQRRG…LEELEVILGE (439 aa)) are cytoplasmic. Positions 39 to 70 (QRRGQSQSQSNSLDYTQTSEPGRQVRPLRAAP) are disordered. The span at 41 to 50 (RGQSQSQSNS) shows a compositional bias: low complexity. Ser-44, Ser-46, Ser-50, and Ser-57 each carry phosphoserine. A coiled-coil region spans residues 90–123 (LDRLEFVLTSLVALRREVEELRSSLQGLAGQIVG). An FFAT motif is present at residues 156–162 (VYFTAAS). Thr-159 carries the phosphothreonine modification. The interval 169–206 (AESEGGYTTANAESDYERDSERESDGDGEDEVSCETVK) is disordered. Ser-182, Ser-192, Ser-212, and Ser-233 each carry phosphoserine. The span at 183-193 (DYERDSERESD) shows a compositional bias: basic and acidic residues.

The protein belongs to the RMDN family. Interacts with PTPN2. Interacts with microtubules. Interacts with VAPB. Interacts (via FFAT motif) with MOSPD2 (via MSP domain). Interacts (via phosphorylated FFAT motif) with MOSPD2, VAPA and VAPB. Phosphorylation at Thr-160 of the FFAT motif activates interaction with MOSPD2, VAPA and VAPB.

The protein localises to the mitochondrion outer membrane. It localises to the cytoplasm. The protein resides in the nucleus. It is found in the cytoskeleton. Its subcellular location is the spindle. The protein localises to the spindle pole. In terms of biological role, involved in cellular calcium homeostasis regulation. May participate in differentiation and apoptosis of keratinocytes. Overexpression induces apoptosis. The chain is Regulator of microtubule dynamics protein 3 from Bos taurus (Bovine).